The following is a 92-amino-acid chain: Small ribosomal subunit protein uS19 (92 aa).

The protein belongs to the universal ribosomal protein uS19 family.

Protein S19 forms a complex with S13 that binds strongly to the 16S ribosomal RNA. This Photobacterium profundum (strain SS9) protein is Small ribosomal subunit protein uS19.